The following is a 147-amino-acid chain: Hemoglobin subunit gamma (147 aa).

Residues 3 to 147 (NFTAEDKAAI…VASALASRYH (145 aa)) enclose the Globin domain. Heme b-binding residues include His64 and His93.

This sequence belongs to the globin family. In terms of assembly, heterotetramer of two alpha chains and two gamma chains in fetal hemoglobin (Hb F). In terms of tissue distribution, red blood cells.

Its function is as follows. Gamma chains make up the fetal hemoglobin F, in combination with alpha chains. This Alouatta belzebul (Red-handed howler monkey) protein is Hemoglobin subunit gamma (HBG).